A 531-amino-acid chain; its full sequence is rRNA methyltransferase 1, mitochondrial (531 aa).

A mitochondrion-targeting transit peptide spans 1-40 (MISIFKILSSPKPATTTTNIINPINIINGIRYFSSNQEDY). Disordered stretches follow at residues 70-141 (ESHY…RTEY) and 230-277 (IEDE…KKTT). A compositionally biased stretch (low complexity) spans 74-136 (NNNNNSNNNS…NNFRNNNNNN (63 aa)). Residues 247–267 (EQNEYEEEQEEEKVQEEEEDN) are compositionally biased toward acidic residues.

It belongs to the class IV-like SAM-binding methyltransferase superfamily. RNA methyltransferase TrmH family.

It is found in the mitochondrion. The enzyme catalyses a uridine in rRNA + S-adenosyl-L-methionine = a 2'-O-methyluridine in rRNA + S-adenosyl-L-homocysteine + H(+). In terms of biological role, S-adenosyl-L-methionine-dependent 2'-O-ribose methyltransferase that catalyzes the formation of a 2'-O-methylguanosine in the mitochondrial large subunit ribosomal RNA (mtLSU rRNA), a universally conserved modification in the peptidyl transferase domain of the mtLSU rRNA. This is rRNA methyltransferase 1, mitochondrial (mrm1) from Dictyostelium discoideum (Social amoeba).